The primary structure comprises 2153 residues: RNA-directed RNA polymerase L (2153 aa).

Residues H36, E54, D97, E110, and V111 each contribute to the Mn(2+) site. Residue K124 is the For endonuclease activity of the active site. Residues 957–1143 (TGKSIKFKRK…AINQEMWKSM (187 aa)) enclose the RdRp catalytic domain. D1100 serves as a coordination point for Mg(2+).

Belongs to the Bunyavirales RNA polymerase family. As to quaternary structure, interacts with the viral nucleoprotein. Mn(2+) is required as a cofactor. It depends on Mg(2+) as a cofactor.

Its subcellular location is the host cytoplasm. It is found in the host perinuclear region. It catalyses the reaction RNA(n) + a ribonucleoside 5'-triphosphate = RNA(n+1) + diphosphate. RNA-dependent RNA polymerase, which is responsible for the replication and transcription of the viral RNA genome using antigenomic RNA as an intermediate. During transcription, synthesizes subgenomic RNAs and assures their capping by a cap-snatching mechanism, which involves the endonuclease activity cleaving the host capped pre-mRNAs. These short capped RNAs are then used as primers for viral transcription. Cleaves ssRNA substrates but not DNA. Seems to downregulate the expression of its own and heterologous mRNAs through its endonuclease activity. The protein is RNA-directed RNA polymerase L of Abrothrix longipilis (Long-haired grass mouse).